The chain runs to 224 residues: Ras-related protein Rab-11C (224 aa).

GTP is bound at residue glycine 17 to serine 24. Residues threonine 39 to phenylalanine 47 carry the Effector region motif. GTP-binding positions include aspartate 65 to glutamine 69 and asparagine 123 to aspartate 126. A disordered region spans residues glutamine 194 to cysteine 224. S-geranylgeranyl cysteine attachment occurs at residues cysteine 223 and cysteine 224.

Belongs to the small GTPase superfamily. Rab family.

Its subcellular location is the membrane. The protein is Ras-related protein Rab-11C (rab11C) of Dictyostelium discoideum (Social amoeba).